The sequence spans 166 residues: Thioredoxin, mitochondrial (166 aa).

The N-terminal 59 residues, 1–59 (MAQRLLLGRFLTSVISRKPPQGVWASLTSKTLQTPQYNAGGLTVMPSPARTVHTTRVCL), are a transit peptide targeting the mitochondrion. The Thioredoxin domain maps to 61–166 (TFNVQDGPDF…LEAFLKKLIG (106 aa)). Active-site nucleophile residues include C90 and C93. C90 and C93 are disulfide-bonded. K152 is subject to N6-acetyllysine; alternate. An N6-succinyllysine; alternate modification is found at K152.

Belongs to the thioredoxin family. As to quaternary structure, monomer.

The protein localises to the mitochondrion. Functionally, important for the control of mitochondrial reactive oxygen species homeostasis, apoptosis regulation and cell viability. Is involved in various redox reactions including the reduction of protein disulfide bonds, through the reversible oxidation of its active center dithiol to a disulfide. The sequence is that of Thioredoxin, mitochondrial (Txn2) from Mus musculus (Mouse).